The following is a 356-amino-acid chain: GTPase Obg (356 aa).

Residues M1–I159 form the Obg domain. Residues A160 to S327 form the OBG-type G domain. Residues G166–S173, F191–H195, D212–G215, N279–D282, and S308–A310 each bind GTP. S173 and T193 together coordinate Mg(2+). The interval S332–G356 is disordered.

The protein belongs to the TRAFAC class OBG-HflX-like GTPase superfamily. OBG GTPase family. As to quaternary structure, monomer. Requires Mg(2+) as cofactor.

Its subcellular location is the cytoplasm. Its function is as follows. An essential GTPase which binds GTP, GDP and possibly (p)ppGpp with moderate affinity, with high nucleotide exchange rates and a fairly low GTP hydrolysis rate. Plays a role in control of the cell cycle, stress response, ribosome biogenesis and in those bacteria that undergo differentiation, in morphogenesis control. This Bradyrhizobium sp. (strain BTAi1 / ATCC BAA-1182) protein is GTPase Obg.